The chain runs to 234 residues: Short neuropeptide F (234 aa).

Positions 1–22 (MYRINLTTFTLLLVLAVGSLMS) are cleaved as a signal peptide. Residues 23-56 (ESLHPSDGAINDLYEYLLQREYAAPVSYADHQIK) constitute a propeptide that is removed on maturation. Phe69 and Phe101 each carry phenylalanine amide. The residue at position 132 (Trp132) is a Tryptophan amide. Residue Phe165 is modified to Phenylalanine amide. The span at 181-190 (TTGQQAQPAN) shows a compositional bias: polar residues. A disordered region spans residues 181 to 234 (TTGQQAQPANEASEKRAPTQRLRWGRSDPALAKDSSEDKALDVEESENTNADDK). Trp204 is modified (tryptophan amide). Positions 207–234 (SDPALAKDSSEDKALDVEESENTNADDK) are excised as a propeptide.

It belongs to the NPY family. As to expression, expressed in all body parts of larva, pupae and adults.

It localises to the secreted. In terms of biological role, plays a role in controlling food intake and regulating body size. The sequence is that of Short neuropeptide F from Anopheles gambiae (African malaria mosquito).